The sequence spans 300 residues: 4-hydroxy-tetrahydrodipicolinate synthase (300 aa).

Thr55 provides a ligand contact to pyruvate. Catalysis depends on Tyr143, which acts as the Proton donor/acceptor. Catalysis depends on Lys171, which acts as the Schiff-base intermediate with substrate. Residue Ile211 participates in pyruvate binding.

It belongs to the DapA family. Homotetramer; dimer of dimers.

It localises to the cytoplasm. It catalyses the reaction L-aspartate 4-semialdehyde + pyruvate = (2S,4S)-4-hydroxy-2,3,4,5-tetrahydrodipicolinate + H2O + H(+). Its pathway is amino-acid biosynthesis; L-lysine biosynthesis via DAP pathway; (S)-tetrahydrodipicolinate from L-aspartate: step 3/4. Catalyzes the condensation of (S)-aspartate-beta-semialdehyde [(S)-ASA] and pyruvate to 4-hydroxy-tetrahydrodipicolinate (HTPA). This chain is 4-hydroxy-tetrahydrodipicolinate synthase, found in Mycobacterium leprae (strain Br4923).